The sequence spans 241 residues: Small ribosomal subunit protein uS3 (241 aa).

A KH type-2 domain is found at 22–91 (VDEYLAYKFH…NPQVTVVKVE (70 aa)). A disordered region spans residues 218 to 241 (EMQQTQPEAPTLEETVEQSGGETQ).

Belongs to the universal ribosomal protein uS3 family. As to quaternary structure, part of the 30S ribosomal subunit.

Binds the lower part of the 30S subunit head. The chain is Small ribosomal subunit protein uS3 from Ignicoccus hospitalis (strain KIN4/I / DSM 18386 / JCM 14125).